We begin with the raw amino-acid sequence, 113 residues long: MSFRLTRNLRVLKPFDYKTIFKHGKIIKGQYWQVLARKIDTPEPRLGLAISKKVHRLAIDRNKTKRIARETFRTHQNDLNHWEFIVMAEHSKPAKNSIMTNDLLHLFKKIITY.

This sequence belongs to the RnpA family. As to quaternary structure, consists of a catalytic RNA component (M1 or rnpB) and a protein subunit.

The catalysed reaction is Endonucleolytic cleavage of RNA, removing 5'-extranucleotides from tRNA precursor.. In terms of biological role, RNaseP catalyzes the removal of the 5'-leader sequence from pre-tRNA to produce the mature 5'-terminus. It can also cleave other RNA substrates such as 4.5S RNA. The protein component plays an auxiliary but essential role in vivo by binding to the 5'-leader sequence and broadening the substrate specificity of the ribozyme. In Vesicomyosocius okutanii subsp. Calyptogena okutanii (strain HA), this protein is Ribonuclease P protein component.